Consider the following 429-residue polypeptide: Growth/differentiation factor 2 (429 aa).

Residues 1-22 form the signal peptide; sequence MCPGALWVALPLLSLLAGSLQG. A propeptide spanning residues 23 to 319 is cleaved from the precursor; it reads KPLQSWGRGS…AGSTLARRKR (297 aa). N-linked (GlcNAc...) asparagine glycosylation is found at asparagine 71 and asparagine 136. Residues 283–301 are compositionally biased toward basic and acidic residues; that stretch reads VLKKLSKDGSTEAGESSHE. Residues 283 to 308 form a disordered region; sequence VLKKLSKDGSTEAGESSHEEDTDGHV. 3 cysteine pairs are disulfide-bonded: cysteine 327/cysteine 393, cysteine 356/cysteine 426, and cysteine 360/cysteine 428. Positions 402-416 are interaction with ENG; the sequence is SVLYKDDMGVPTLKY.

Belongs to the TGF-beta family. As to quaternary structure, homodimer; disulfide-linked. Detected in extracellular fluid as mature homodimer, and in complex with its propeptide. Interacts with ACVRL1, BMPR2 and ACVR2B with high affinity (in vitro). Identified in a complex with ACVRL1 and ACVR2B. Has ten times lower affinity for ACVR2A (in vitro). Interacts with ENG, forming a heterotetramer with a 2:2 stoichiometry. Can form a heteromeric complex with ENG and ACVRL1. Interacts with type I receptor ACVR1. Post-translationally, a reversible disulfide bond can be formed between the two subunits in the homodimer; this has no effect on GDF2 activity. As to expression, detected in blood plasma (at protein level).

It localises to the secreted. Its function is as follows. Potent circulating inhibitor of angiogenesis. Signals through the type I activin receptor ACVRL1 but not other Alks. Signaling through SMAD1 in endothelial cells requires TGF-beta coreceptor endoglin/ENG. This chain is Growth/differentiation factor 2 (GDF2), found in Homo sapiens (Human).